A 207-amino-acid chain; its full sequence is Macrophage immunometabolism regulator (207 aa).

Residue Met1 is modified to N-acetylmethionine. Residues 1–41 (MEVDINGDSRSTLTTLPLPVAEGSSPGKAEAEKPRCSSTPC) are disordered. 2 positions are modified to phosphoserine: Ser25 and Ser167.

It belongs to the UNC119-binding protein family. In terms of assembly, interacts with UNC119 and UNC119B; interaction preferentially takes place when UNC119 and UNC119B are unliganded with myristoylated proteins. Highly expressed in photoreceptors.

It localises to the cytoplasm. The protein localises to the cell projection. It is found in the cilium. Functionally, regulates the macrophage function, by enhancing the resolution of inflammation and wound repair functions mediated by M2 macrophages. The regulation of macrophage function is, due at least in part, to its ability to inhibit glycolysis. May also play a role in trafficking of proteins via its interaction with UNC119 and UNC119B cargo adapters: may help the release of UNC119 and UNC119B cargo or the recycling of UNC119 and UNC119B. May play a role in ciliary membrane localization via its interaction with UNC119B and protein transport into photoreceptor cells. In Mus musculus (Mouse), this protein is Macrophage immunometabolism regulator.